Consider the following 476-residue polypeptide: Cardiolipin synthase (476 aa).

The next 2 helical transmembrane spans lie at 2–22 and 31–51; these read HLFINMIFLINIVFIISIIFI and WAWILILTFLPILGFIIYILF. PLD phosphodiesterase domains lie at 207-234 and 389-416; these read INYRNHRKILIIDSKVAFLGGFNIGDEY and EKGFLHAKTIVADSSICSVGTANMDIRS. Residues H212, K214, D219, H394, K396, and D401 contribute to the active site.

It belongs to the phospholipase D family. Cardiolipin synthase subfamily.

The protein resides in the cell membrane. It carries out the reaction 2 a 1,2-diacyl-sn-glycero-3-phospho-(1'-sn-glycerol) = a cardiolipin + glycerol. Functionally, catalyzes the reversible phosphatidyl group transfer from one phosphatidylglycerol molecule to another to form cardiolipin (CL) (diphosphatidylglycerol) and glycerol. The protein is Cardiolipin synthase (cls) of Clostridium perfringens (strain ATCC 13124 / DSM 756 / JCM 1290 / NCIMB 6125 / NCTC 8237 / Type A).